The chain runs to 845 residues: Putative DEAD-box ATP-dependent RNA helicase 33 (845 aa).

Disordered regions lie at residues 129–149 (GHPD…PMSP) and 282–302 (KFRK…NEGK). Residues 289 to 298 (STEEDSDEEG) show a composition bias toward acidic residues. A Q motif motif is present at residues 375-403 (KRFDESCISPLTLKALSASGIVKMTRVQD). Positions 406-590 (LSECLDGKDA…QLVLKRDHSY (185 aa)) constitute a Helicase ATP-binding domain. Residue 419-426 (AKTGTGKS) coordinates ATP. A DEAD box motif is present at residues 538–541 (DEAD). In terms of domain architecture, Helicase C-terminal spans 624–778 (LLKEHINNMP…QVDQSMAKID (155 aa)).

This sequence belongs to the DEAD box helicase family.

It catalyses the reaction ATP + H2O = ADP + phosphate + H(+). The chain is Putative DEAD-box ATP-dependent RNA helicase 33 (RH33) from Arabidopsis thaliana (Mouse-ear cress).